We begin with the raw amino-acid sequence, 311 residues long: tRNA pseudouridine synthase B (311 aa).

D39 (nucleophile) is an active-site residue. Residues 237–268 are disordered; sequence RELSEQETTEISFGRRIAAGPGAGTPDAATAE. Positions 254–268 are enriched in low complexity; that stretch reads AAGPGAGTPDAATAE.

It belongs to the pseudouridine synthase TruB family. Type 1 subfamily.

The enzyme catalyses uridine(55) in tRNA = pseudouridine(55) in tRNA. Responsible for synthesis of pseudouridine from uracil-55 in the psi GC loop of transfer RNAs. This is tRNA pseudouridine synthase B from Paenarthrobacter aurescens (strain TC1).